The chain runs to 282 residues: MATPFLPSGATTGDSGGELSSGDDSGDMESFQTPEAEGTRSLAELFEKAAAHVQGLVQVASREQLLYLYARFKQVKVGNCNTPKPNFFDFEGKQKWEAWKALGDSSPSQAMQEYIAAVKKLDPGWNPQVSEKKGKEGSSGFGGPVVSSLYHEETIREEDKNIFDYCRENNIDHIAKAIKSKAADVNMTDEEGRALLHWACDRGHKELVKVLLQYEAGINCQDNEGQTALHYAAACEFLDIVELLLQSGADPTLRDQDGCLPEEVTGCKAVSLLLQRHRASKA.

The interval 1–39 (MATPFLPSGATTGDSGGELSSGDDSGDMESFQTPEAEGT) is disordered. The residue at position 41 (serine 41) is a Phosphoserine. The region spanning 42–127 (LAELFEKAAA…VKKLDPGWNP (86 aa)) is the ACB domain. Residues 69-73 (YARFK) and lysine 95 each bind an acyl-CoA. The residue at position 106 (serine 106) is a Phosphoserine. Tyrosine 114 contributes to the an acyl-CoA binding site. ANK repeat units follow at residues 191 to 220 (EGRA…GINC) and 224 to 253 (EGQT…DPTL).

As to quaternary structure, monomer.

It localises to the cytoplasm. The protein localises to the nucleus. In terms of biological role, binds long-chain acyl-coenzyme A molecules with a strong preference for unsaturated C18:1-CoA, lower affinity for unsaturated C20:4-CoA, and very weak affinity for saturated C16:0-CoA. Does not bind fatty acids. Plays a role in protein N-myristoylation. This chain is Acyl-CoA-binding domain-containing protein 6 (Acbd6), found in Mus musculus (Mouse).